The chain runs to 645 residues: Beta-galactosidase (645 aa).

Arg-102 contacts substrate. Residue Cys-106 coordinates Zn(2+). Asn-140 contributes to the substrate binding site. Catalysis depends on Glu-141, which acts as the Proton donor. Zn(2+) is bound by residues Cys-150, Cys-152, and Cys-155. The active-site Nucleophile is Glu-312. Substrate contacts are provided by residues Trp-320 and 360-363; that span reads EQMH.

Belongs to the glycosyl hydrolase 42 family. As to quaternary structure, homotrimer.

The enzyme catalyses Hydrolysis of terminal non-reducing beta-D-galactose residues in beta-D-galactosides.. Its activity is regulated as follows. Inhibited by Cu(2+) and Fe(2+), and moderately activated by divalent cations such as Co(2+), Mn(2+) and Zn(2+). Considerably activated by dithiothreitol, beta-mercaptoethanol and cysteine. The chain is Beta-galactosidase from Thermus thermophilus.